We begin with the raw amino-acid sequence, 421 residues long: MYAFVRFLEDNVCYALPVSCVRDFSPRSRLDFDNQKVYAVYRGPEELGAGPESPPRAPRDWGALLLHKAQILALAEDKSDLENSVMQKKIKIPKLSLNHVEEDGEVKDYGEEDLQLRHIKRPEGRKPSEVAHKSIEAVVARLEKQNGLSLGHSTCPEEVFVEASPGTEDMDSLEDAVVPRALYEELLRNYQQQQEEMRHLQQELERTRRQLVQQAKKLKEYGALVSEMKELRDLNRRLQDVLLLRLGSGPAIDLEKVKSECLEPEPELRSTFSEEANTSSYYPAPAPVMDKYILDNGKVHLGSGIWVDEEKWHQLQVTQGDSKYTKNLAVMIWGTDVLKNRSVTGVATKKKKDAVPKPPLSPHKLSIVRECLYDRIAQETVDETEIAQRLSKVNKYICEKIMDINKSCKNEERREAKYNLQ.

Lys-133 bears the N6-acetyllysine mark. Residues 180-243 (RALYEELLRN…LNRRLQDVLL (64 aa)) are a coiled coil. Lys-258 participates in a covalent cross-link: Glycyl lysine isopeptide (Lys-Gly) (interchain with G-Cter in SUMO2). The 107-residue stretch at 302 to 408 (GSGIWVDEEK…EKIMDINKSC (107 aa)) folds into the BEN domain.

In terms of biological role, acts as a transcriptional repressor. This is BEN domain-containing protein 5 (BEND5) from Homo sapiens (Human).